Here is a 135-residue protein sequence, read N- to C-terminus: Large ribosomal subunit protein bL19 (135 aa).

The protein belongs to the bacterial ribosomal protein bL19 family.

Functionally, this protein is located at the 30S-50S ribosomal subunit interface and may play a role in the structure and function of the aminoacyl-tRNA binding site. This is Large ribosomal subunit protein bL19 from Xanthomonas euvesicatoria pv. vesicatoria (strain 85-10) (Xanthomonas campestris pv. vesicatoria).